The following is a 590-amino-acid chain: MSQDSKPTKSAAGAIAEPSNFLRQIIDHDLASGAFAQRTNLAGEAIPSIITRFPPEPNGYLHIGHAKSICLNFGLAADYNNQSGGARCNMRLDDTNPVKEDVEYADSILDAVKWLGFDWGTHLYHASDYFDRLYEFAEILIQNSKAYVDSQSADDIHTNRGNFGQVGKNSPYRERTPDENLQLFREMRDGKFKDGEHVLRLKIDMAHPNIVMRDPVVYRIRHTDHHRTGSKWCIYPLYDFTHCISDALENVSHSICTLEFENNRPLYDWIVNSLKELGVFKDPVPHQYEFARLNLTYTITSKRKLLQLVEEQHVEGWDDPRMPTIVGIRRRGYTPESIRLFCERIGVSKADSWIDMSTLDQALRDDLEARAPRATAVLKPLKLVVENFDAAHSEACSAPRHPHHPEWGNREFNFTKELWIEADDFMQEPVKGFFRLYPPIGDQPGSRVRLRHGFVVECTDFETDAKGNITQVNVNYFPDSKSGTPGSNNYKVKGNIHWISAAEAIPAEVRLYDHLFTDPHPDSGDKNFLDTINPHSKETIKAYLEPCMKDVKPEDRFQFERHGYFVADQNDSAPGKPVFNRTVGLKDSWK.

Positions P55–H65 match the 'HIGH' region motif. Residues E56–N58 and H62–S68 contribute to the ATP site. 2 residues coordinate L-glutamine: D93 and Y238. ATP-binding positions include T257 and R292 to L293. A 'KMSKS' region motif is present at residues I299–R303.

This sequence belongs to the class-I aminoacyl-tRNA synthetase family. Monomer.

The protein resides in the cytoplasm. It catalyses the reaction tRNA(Gln) + L-glutamine + ATP = L-glutaminyl-tRNA(Gln) + AMP + diphosphate. The chain is Glutamine--tRNA ligase from Polynucleobacter asymbioticus (strain DSM 18221 / CIP 109841 / QLW-P1DMWA-1) (Polynucleobacter necessarius subsp. asymbioticus).